The primary structure comprises 375 residues: AT-rich binding protein (375 aa).

A C2H2-type 1 zinc finger spans residues I29–H52. A compositionally biased stretch (basic and acidic residues) spans D110–E119. Residues D110–Q142 form a disordered region. Residues Q121–Q142 show a composition bias toward low complexity. C2H2-type zinc fingers lie at residues Y308–H332 and F338–H361.

It is found in the nucleus. May be a transcription factor for genes having (A+T) stretches in their promoter and/or enhancer regions. Binds to AT rich DNA. The chain is AT-rich binding protein from Drosophila pseudoobscura pseudoobscura (Fruit fly).